A 119-amino-acid chain; its full sequence is Large ribosomal subunit protein uL22c (119 aa).

The protein belongs to the universal ribosomal protein uL22 family. As to quaternary structure, part of the 50S ribosomal subunit.

It localises to the plastid. It is found in the chloroplast. Functionally, this protein binds specifically to 23S rRNA. Its function is as follows. The globular domain of the protein is located near the polypeptide exit tunnel on the outside of the subunit, while an extended beta-hairpin is found that lines the wall of the exit tunnel in the center of the 70S ribosome. This Mesostigma viride (Green alga) protein is Large ribosomal subunit protein uL22c (rpl22).